The sequence spans 454 residues: Asparagine--tRNA ligase (454 aa).

The protein belongs to the class-II aminoacyl-tRNA synthetase family. In terms of assembly, homodimer.

The protein resides in the cytoplasm. It carries out the reaction tRNA(Asn) + L-asparagine + ATP = L-asparaginyl-tRNA(Asn) + AMP + diphosphate + H(+). The protein is Asparagine--tRNA ligase of Mesoplasma florum (strain ATCC 33453 / NBRC 100688 / NCTC 11704 / L1) (Acholeplasma florum).